Reading from the N-terminus, the 342-residue chain is Ribosomal RNA small subunit methyltransferase C (342 aa).

Belongs to the methyltransferase superfamily. RsmC family. In terms of assembly, monomer.

The protein localises to the cytoplasm. The catalysed reaction is guanosine(1207) in 16S rRNA + S-adenosyl-L-methionine = N(2)-methylguanosine(1207) in 16S rRNA + S-adenosyl-L-homocysteine + H(+). Specifically methylates the guanine in position 1207 of 16S rRNA in the 30S particle. The chain is Ribosomal RNA small subunit methyltransferase C from Salmonella paratyphi B (strain ATCC BAA-1250 / SPB7).